We begin with the raw amino-acid sequence, 499 residues long: Xylulose kinase (499 aa).

81-82 contacts substrate; that stretch reads MH. Residue Asp-239 is the Proton acceptor of the active site.

It belongs to the FGGY kinase family.

It catalyses the reaction D-xylulose + ATP = D-xylulose 5-phosphate + ADP + H(+). Catalyzes the phosphorylation of D-xylulose to D-xylulose 5-phosphate. The chain is Xylulose kinase from Bacillus subtilis (strain 168).